A 345-amino-acid chain; its full sequence is Acetylserotonin O-methyltransferase (345 aa).

S-adenosyl-L-methionine-binding positions include Y147, W164, D210, 235 to 237 (GDF), and R252. Catalysis depends on H255, which acts as the Proton donor/acceptor. Residues D256, N302, and Q306 each coordinate substrate.

The protein belongs to the class I-like SAM-binding methyltransferase superfamily. Cation-independent O-methyltransferase family. As to quaternary structure, homodimer. In terms of tissue distribution, highly expressed in pineal gland. In the retina, 10- to 100-fold lower expression compared to pineal gland, if any.

It catalyses the reaction N-acetylserotonin + S-adenosyl-L-methionine = melatonin + S-adenosyl-L-homocysteine + H(+). The protein operates within aromatic compound metabolism; melatonin biosynthesis; melatonin from serotonin: step 1/2. Its function is as follows. Catalyzes the transfer of a methyl group onto N-acetylserotonin, producing melatonin (N-acetyl-5-methoxytryptamine). The protein is Acetylserotonin O-methyltransferase (ASMT) of Macaca mulatta (Rhesus macaque).